Here is a 313-residue protein sequence, read N- to C-terminus: MEYQDYYKILGVSRDATADEIKKSYRKLARKYHPDVSSEPNAEEKFKQVKEAYEVLKDVEKRKAYDAIGSGWKQGQGFTPPPGWESRPGGEGVRPEFREGFSDFFESLFGGLGQEARWTRQEFKQRGQDQHSRVTVSLEEAFNGSTRLLTLQEPIVDYQTGQVTSKTRQLRIKIPAGVTEGQQIRLQGQGLPGIGGAPNGDLYLEIHLAPHSLFTVEGKDVYLNLPVTPWEAALGAKVSIPTLGGSVDLTLPPGSQTGQKLRLKGRGLPGGTPGDQYVLIKIYIPEPKNDQQKELYQQMAEQMPFDPRKELLG.

A J domain is found at 5–69 (DYYKILGVSR…EKRKAYDAIG (65 aa)). A disordered region spans residues 71–93 (GWKQGQGFTPPPGWESRPGGEGV).

The protein localises to the cytoplasm. Its subcellular location is the nucleoid. DNA-binding protein that preferentially recognizes a curved DNA sequence. It is probably a functional analog of DnaJ; displays overlapping activities with DnaJ, but functions under different conditions, probably acting as a molecular chaperone in an adaptive response to environmental stresses other than heat shock. Lacks autonomous chaperone activity; binds native substrates and targets them for recognition by DnaK. Its activity is inhibited by the binding of CbpM. The chain is Curved DNA-binding protein from Coxiella burnetii (strain Dugway 5J108-111).